A 287-amino-acid polypeptide reads, in one-letter code: Ribosomal RNA small subunit methyltransferase A (287 aa).

The S-adenosyl-L-methionine site is built by asparagine 28, leucine 30, glycine 55, glutamate 77, aspartate 103, and asparagine 123.

This sequence belongs to the class I-like SAM-binding methyltransferase superfamily. rRNA adenine N(6)-methyltransferase family. RsmA subfamily.

It localises to the cytoplasm. It catalyses the reaction adenosine(1518)/adenosine(1519) in 16S rRNA + 4 S-adenosyl-L-methionine = N(6)-dimethyladenosine(1518)/N(6)-dimethyladenosine(1519) in 16S rRNA + 4 S-adenosyl-L-homocysteine + 4 H(+). Specifically dimethylates two adjacent adenosines (A1518 and A1519) in the loop of a conserved hairpin near the 3'-end of 16S rRNA in the 30S particle. May play a critical role in biogenesis of 30S subunits. This Rhodopseudomonas palustris (strain BisA53) protein is Ribosomal RNA small subunit methyltransferase A.